Consider the following 226-residue polypeptide: Deoxyribose-phosphate aldolase (226 aa).

The active-site Proton donor/acceptor is D96. The Schiff-base intermediate with acetaldehyde role is filled by K157. K185 acts as the Proton donor/acceptor in catalysis.

It belongs to the DeoC/FbaB aldolase family. DeoC type 1 subfamily.

The protein localises to the cytoplasm. The catalysed reaction is 2-deoxy-D-ribose 5-phosphate = D-glyceraldehyde 3-phosphate + acetaldehyde. The protein operates within carbohydrate degradation; 2-deoxy-D-ribose 1-phosphate degradation; D-glyceraldehyde 3-phosphate and acetaldehyde from 2-deoxy-alpha-D-ribose 1-phosphate: step 2/2. Functionally, catalyzes a reversible aldol reaction between acetaldehyde and D-glyceraldehyde 3-phosphate to generate 2-deoxy-D-ribose 5-phosphate. The polypeptide is Deoxyribose-phosphate aldolase (Trichormus variabilis (strain ATCC 29413 / PCC 7937) (Anabaena variabilis)).